A 446-amino-acid polypeptide reads, in one-letter code: Coiled-coil domain-containing protein 112 (446 aa).

2 coiled-coil regions span residues 23 to 116 (LEEL…RKID) and 219 to 400 (ERKK…NVSR). Disordered regions lie at residues 247 to 277 (NNTPMLFHNKPEDNQKQKEEQRKKQKLAVEA) and 394 to 430 (VENNVSRDPSRLYKPTKGWEERTKKIGPTGSGPLLHI). Positions 255–268 (NKPEDNQKQKEEQR) are enriched in basic and acidic residues.

Its subcellular location is the cytoplasm. The protein resides in the cytoskeleton. The protein localises to the microtubule organizing center. It is found in the centrosome. It localises to the centriolar satellite. This chain is Coiled-coil domain-containing protein 112 (CCDC112), found in Macaca fascicularis (Crab-eating macaque).